The primary structure comprises 388 residues: MNLHEYQAKELLASYGLPVQGGILAHNGEEAAAAYDKLGGKFAVVKAQVHAGGRGKAGGVKVVKSREKAKEVAESLIGTNLVTYQTDANGQPVNSVLVCEDMYPVQTELYLGAVVDRSTRRVTFMASTEGGVEIEKVAAETPEKIFKVTVDPLVGLQPCQAREVAFQLGLKDKQINEFAKLMTGAYKAFVENDFALFEVNPLAVRENGALACVDGKIGIDSNALYRLPKIAELRDKSQENERELKASEFDLNYVALEGNIGCMVNGAGLAMATMDIIKLKGGQPANFLDVGGGATKDRVVEAFKLILEDKSVKGVLINIFGGIVRCDMIAEAIVAAVKEINVNVPVVVRLEGNNAELGAKILNESGLKLTSADGLNDAAEKIVAAVNA.

One can recognise an ATP-grasp domain in the interval 9-245 (KELLASYGLP…KSQENERELK (237 aa)). Residues Lys-46, 53 to 55 (GRG), Glu-100, Tyr-103, and Glu-108 each bind ATP. The Mg(2+) site is built by Asn-200 and Asp-214. Substrate-binding positions include Asn-265 and 322 to 324 (GIV).

This sequence belongs to the succinate/malate CoA ligase beta subunit family. Heterotetramer of two alpha and two beta subunits. Requires Mg(2+) as cofactor.

The catalysed reaction is succinate + ATP + CoA = succinyl-CoA + ADP + phosphate. The enzyme catalyses GTP + succinate + CoA = succinyl-CoA + GDP + phosphate. It participates in carbohydrate metabolism; tricarboxylic acid cycle; succinate from succinyl-CoA (ligase route): step 1/1. Succinyl-CoA synthetase functions in the citric acid cycle (TCA), coupling the hydrolysis of succinyl-CoA to the synthesis of either ATP or GTP and thus represents the only step of substrate-level phosphorylation in the TCA. The beta subunit provides nucleotide specificity of the enzyme and binds the substrate succinate, while the binding sites for coenzyme A and phosphate are found in the alpha subunit. This chain is Succinate--CoA ligase [ADP-forming] subunit beta, found in Neisseria gonorrhoeae (strain NCCP11945).